We begin with the raw amino-acid sequence, 165 residues long: NADPH-dependent 7-cyano-7-deazaguanine reductase (165 aa).

The disordered stretch occupies residues 1-24 (MTTRSTDQTEHLRALGQKTPYPAA). The Thioimide intermediate role is filled by Cys56. Asp63 functions as the Proton donor in the catalytic mechanism. Residues 78–80 (VES) and 97–98 (ME) each bind substrate.

This sequence belongs to the GTP cyclohydrolase I family. QueF type 1 subfamily.

Its subcellular location is the cytoplasm. It catalyses the reaction 7-aminomethyl-7-carbaguanine + 2 NADP(+) = 7-cyano-7-deazaguanine + 2 NADPH + 3 H(+). It functions in the pathway tRNA modification; tRNA-queuosine biosynthesis. Catalyzes the NADPH-dependent reduction of 7-cyano-7-deazaguanine (preQ0) to 7-aminomethyl-7-deazaguanine (preQ1). In Nitratidesulfovibrio vulgaris (strain ATCC 29579 / DSM 644 / CCUG 34227 / NCIMB 8303 / VKM B-1760 / Hildenborough) (Desulfovibrio vulgaris), this protein is NADPH-dependent 7-cyano-7-deazaguanine reductase.